We begin with the raw amino-acid sequence, 211 residues long: LexA repressor (211 aa).

Positions 29-49 form a DNA-binding region, H-T-H motif; that stretch reads VREICTAVGLRSTSTVHSHLN. Catalysis depends on for autocatalytic cleavage activity residues Ser131 and Lys169.

Belongs to the peptidase S24 family. Homodimer.

The catalysed reaction is Hydrolysis of Ala-|-Gly bond in repressor LexA.. In terms of biological role, represses a number of genes involved in the response to DNA damage (SOS response), including recA and lexA. In the presence of single-stranded DNA, RecA interacts with LexA causing an autocatalytic cleavage which disrupts the DNA-binding part of LexA, leading to derepression of the SOS regulon and eventually DNA repair. In Clostridioides difficile (strain 630) (Peptoclostridium difficile), this protein is LexA repressor.